A 357-amino-acid chain; its full sequence is Protein RecA (357 aa).

Residue 67–74 (GPESSGKT) participates in ATP binding. Residues 332 to 357 (PSAMSSSSSDDENSEGNVDFETGEVF) are disordered.

Belongs to the RecA family.

It localises to the cytoplasm. Can catalyze the hydrolysis of ATP in the presence of single-stranded DNA, the ATP-dependent uptake of single-stranded DNA by duplex DNA, and the ATP-dependent hybridization of homologous single-stranded DNAs. It interacts with LexA causing its activation and leading to its autocatalytic cleavage. The polypeptide is Protein RecA (Shewanella sp. (strain ANA-3)).